A 612-amino-acid polypeptide reads, in one-letter code: 1,8-cineole synthase, chloroplastic (612 aa).

The N-terminal 52 residues, 1 to 52, are a transit peptide targeting the chloroplast; the sequence is MALVSVAPLASRSCLSKSLISSTHELKPLRRTILPTLRWKSATPSINMCLTT. Positions 363, 367, and 515 each coordinate Mg(2+). Positions 363–367 match the DDXXD motif motif; the sequence is DDIYD.

This sequence belongs to the terpene synthase family. Tpsd subfamily. Mg(2+) serves as cofactor. Requires Mn(2+) as cofactor.

Its subcellular location is the plastid. The protein resides in the chloroplast. The catalysed reaction is (2E)-geranyl diphosphate + H2O = 1,8-cineole + diphosphate. It functions in the pathway terpene metabolism; oleoresin biosynthesis. In terms of biological role, terpene synthase (TPS) involved in the biosynthesis of monoterpene natural products included in conifer oleoresin secretions and volatile emissions; these compounds contribute to biotic and abiotic stress defense against herbivores and pathogens. Catalyzes the conversion of (2E)-geranyl diphosphate (GPP) to 1,8-cineole. The polypeptide is 1,8-cineole synthase, chloroplastic (Picea sitchensis (Sitka spruce)).